Reading from the N-terminus, the 345-residue chain is Tropomodulin-4 (345 aa).

The segment at 42 to 63 is disordered; the sequence is NMLLPAGLRQRDQTKKSPTGPL.

Belongs to the tropomodulin family. Binds to the N-terminus of tropomyosin and to actin.

The protein localises to the cytoplasm. Its subcellular location is the cytoskeleton. Functionally, blocks the elongation and depolymerization of the actin filaments at the pointed end. The Tmod/TM complex contributes to the formation of the short actin protofilament, which in turn defines the geometry of the membrane skeleton. The sequence is that of Tropomodulin-4 (TMOD4) from Bos taurus (Bovine).